The following is an 89-amino-acid chain: Putative regulatory protein CPE1749 (89 aa).

This sequence belongs to the RemA family.

The chain is Putative regulatory protein CPE1749 from Clostridium perfringens (strain 13 / Type A).